The sequence spans 408 residues: Dicamba O-demethylase 1, ferredoxin reductase component (408 aa).

Residues Gly14, Lys49, Val82, Arg130, Asp279, and Val298 each coordinate FAD.

The protein belongs to the FAD-dependent oxidoreductase family. Monomer. The dicamba O-demethylase multicomponent enzyme system is composed of an oxygenase component (DdmC) and an electron transfer component formed by a ferredoxin reductase (DdmA1) and a ferredoxin (DdmB). In vitro, dicamba O-demethylase assays in which DdmA2 is substituted for DdmA1 demonstrate that the two enzymes possess nearly identical activities. It depends on FAD as a cofactor.

It carries out the reaction 2 reduced [2Fe-2S]-[ferredoxin] + NAD(+) + H(+) = 2 oxidized [2Fe-2S]-[ferredoxin] + NADH. Functionally, component of the dicamba O-demethylase multicomponent enzyme system involved in the degradation of the herbicide dicamba. In vitro, catalyzes the transfers of electrons from ferredoxin (DdmB) to NADH. Both NADH and NADPH support enzyme activity, with NADH being markedly more effective than NADPH. In Stenotrophomonas maltophilia (Pseudomonas maltophilia), this protein is Dicamba O-demethylase 1, ferredoxin reductase component.